A 142-amino-acid polypeptide reads, in one-letter code: Ribonuclease VapC25 (142 aa).

Positions 3-139 (LIDVNVLLAA…ARFASVRHIR (137 aa)) constitute a PINc domain. 2 residues coordinate Mg(2+): aspartate 5 and aspartate 108.

The protein belongs to the PINc/VapC protein family. The cofactor is Mg(2+).

Functionally, toxic component of a type II toxin-antitoxin (TA) system. An RNase. Upon expression in M.smegmatis inhibits colony formation. Its toxic effect is neutralized by coexpression with cognate antitoxin VapB25. The chain is Ribonuclease VapC25 from Mycobacterium tuberculosis (strain ATCC 25618 / H37Rv).